The following is a 178-amino-acid chain: Stathmin-2-B (178 aa).

Residues 38 to 178 (DDMEVKQLNK…KNKEQLELSG (141 aa)) form the SLD domain. Residues 75-178 (KRKDVSLEEI…KNKEQLELSG (104 aa)) adopt a coiled-coil conformation.

This sequence belongs to the stathmin family. Nervous tissue.

It localises to the cytoplasm. Its subcellular location is the membrane. The protein localises to the cell projection. The protein resides in the lamellipodium. The protein is Stathmin-2-B (stmn2-b) of Xenopus laevis (African clawed frog).